The primary structure comprises 1275 residues: Myosin-1 (1275 aa).

One can recognise a Myosin motor domain in the interval 35-727 (VGVSDLTLLS…TLFAMEDMRD (693 aa)). 128 to 135 (GESGAGKT) contacts ATP. Serine 361 carries the phosphoserine modification. An actin-binding region spans residues 410–493 (TIGILDIYGF…PGLFAALNDS (84 aa)). IQ domains follow at residues 731–751 (HNMAARIQRAWRRYVKRKEDA) and 752–777 (ARLIQNAWKVKKHGNQFEQLRDYGNG). The TH1 domain occupies 785–974 (RRRMSMLGSR…KSGTVSVRPG (190 aa)). Disordered stretches follow at residues 966–1064 (SGTV…LNNN), 1089–1128 (QNHNSNPTAPSRPAKKAAPAPPVKKTAPPPPPSLSAAKPK), 1183–1230 (SECP…GGLS), and 1251–1275 (IADALKKRSATRDSDDEEEDDDDDW). The segment covering 977–992 (PDSQNPKRPRATSSKV) has biased composition (polar residues). The segment covering 1095-1106 (PTAPSRPAKKAA) has biased composition (low complexity). Residues 1107–1121 (PAPPVKKTAPPPPPS) are compositionally biased toward pro residues. The 61-residue stretch at 1127–1187 (PKWPTFKANY…PTAYISECPP (61 aa)) folds into the SH3 domain. Over residues 1254-1263 (ALKKRSATRD) the composition is skewed to basic and acidic residues. Over residues 1264 to 1275 (SDDEEEDDDDDW) the composition is skewed to acidic residues.

The protein belongs to the TRAFAC class myosin-kinesin ATPase superfamily. Myosin family. In terms of processing, phosphorylation of the TEDS site (Ser-361) is required for the polarization of the actin cytoskeleton. Phosphorylation probably activates the myosin-I ATPase activity.

Its subcellular location is the cytoplasm. The protein localises to the cytoskeleton. It is found in the actin patch. Its function is as follows. Type-I myosin implicated in the organization of the actin cytoskeleton. Required for proper actin cytoskeleton polarization. At the cell cortex, assembles in patch-like structures together with proteins from the actin-polymerizing machinery and promotes actin assembly. Functions as actin nucleation-promoting factor (NPF) for the Arp2/3 complex. This is Myosin-1 (MYO1) from Meyerozyma guilliermondii (strain ATCC 6260 / CBS 566 / DSM 6381 / JCM 1539 / NBRC 10279 / NRRL Y-324) (Yeast).